Consider the following 457-residue polypeptide: uncharacterized protein (457 aa).

The next 12 membrane-spanning stretches (helical) occupy residues 18–38, 44–64, 101–121, 158–178, 188–208, 228–248, 273–293, 294–314, 316–336, 355–375, 396–416, and 433–453; these read VMTV…PYLV, GAYV…MILV, MGLL…GWVI, IIFY…KGII, LMPL…TLPG, LFIF…GVLI, IIAV…GIEP, NAGP…LWAG, FFAI…SITI, AIVL…ILGD, SGNI…GFVL, and IKIW…VIFI.

The protein belongs to the sodium:neurotransmitter symporter (SNF) (TC 2.A.22) family.

It is found in the cell membrane. In terms of biological role, putative sodium-dependent transporter. This is an uncharacterized protein from Haemophilus influenzae (strain ATCC 51907 / DSM 11121 / KW20 / Rd).